A 359-amino-acid polypeptide reads, in one-letter code: MNKQLLSCSLKSGKQVTMVVASVATDGVDQQVEISYYDQKVIGNGSFGVVFLAKLSTTNEMVAIKKVLQDKRFKNRELQIMRKLNHPNIVKLKYFFYSSGDKKDELYLNLILEYVPETVYRVARHYSKQRQSIPMIYVKLYMYQLLRSLAYIHSIGICHRDIKPQNLLIDPETGILKLCDFGSAKYLVRNEPNVSYICSRYYRAPELIFGATNYTNSIDVWSAGTVIAELLLGQPIFPGDSGVDQLVEIIKVLGTPTREQIQSMNPNYKEFKFPQIKAHPWNKVFRVHTPAEAIDLISKIIEYTPTSRPTPQAACQHAFFDELRSPDARLPSGRALPQLEMDGPNEVSATGGDMAGPSA.

A Protein kinase domain is found at 36–320 (YYDQKVIGNG…PQAACQHAFF (285 aa)). Residues 42 to 50 (IGNGSFGVV) and Lys-65 contribute to the ATP site. Residue Asp-161 is the Proton acceptor of the active site. Positions 330-359 (LPSGRALPQLEMDGPNEVSATGGDMAGPSA) are disordered.

The protein belongs to the protein kinase superfamily. CMGC Ser/Thr protein kinase family. GSK-3 subfamily. Monomer. Interacts with axl-1.

It carries out the reaction L-seryl-[tau protein] + ATP = O-phospho-L-seryl-[tau protein] + ADP + H(+). The enzyme catalyses L-threonyl-[tau protein] + ATP = O-phospho-L-threonyl-[tau protein] + ADP + H(+). Its function is as follows. Phosphorylates oma-1, a regulator of the oocyte-to-embryo transition, enabling its degradation. Phosphorylates skn-1, preventing it from accumulating in nuclei and thus inhibiting phase II gene expression in the oxidative stress defense. Involved in mesendoderm specification and mitotic spindle orientation in EMS blastomeres. Thought to be a branch point in these processes as proteins downstream are not required. Negatively regulates Wnt signaling in vulval precursor cells and acts as a Wnt-independent repressor of med-1 and med-2 in the C lineage inhibiting mesoderm development. Required for normal lifespan and LiCl-induced lifespan extension. The polypeptide is Glycogen synthase kinase-3 (gsk-3) (Caenorhabditis briggsae).